We begin with the raw amino-acid sequence, 282 residues long: Putative lactoylglutathione lyase (282 aa).

Alanine 2 bears the N-acetylalanine mark. VOC domains are found at residues 17–141 (RFLH…LIQR) and 147–274 (PLCQ…LVDN). Position 20 (histidine 20) interacts with Zn(2+). Arginine 24 contributes to the substrate binding site. Residue glutamate 71 coordinates Zn(2+). Asparagine 75 and histidine 89 together coordinate substrate. Histidine 89 and glutamate 137 together coordinate Zn(2+). The Proton donor/acceptor role is filled by glutamate 137. 254 to 255 (LG) contacts substrate.

This sequence belongs to the glyoxalase I family. Zn(2+) serves as cofactor.

The catalysed reaction is (R)-S-lactoylglutathione = methylglyoxal + glutathione. It participates in secondary metabolite metabolism; methylglyoxal degradation; (R)-lactate from methylglyoxal: step 1/2. Its function is as follows. Catalyzes the conversion of hemimercaptal, formed from methylglyoxal and glutathione, to S-lactoylglutathione. This is Putative lactoylglutathione lyase from Brassica oleracea var. gemmifera (Brussel sprouts).